The sequence spans 968 residues: Isoleucine--tRNA ligase (968 aa).

Positions 68–78 (PYANGALHMGH) match the 'HIGH' region motif. Glutamate 582 is an L-isoleucyl-5'-AMP binding site. The short motif at 623-627 (KMSKS) is the 'KMSKS' region element. Lysine 626 contributes to the ATP binding site. Zn(2+) is bound by residues cysteine 936, cysteine 939, cysteine 956, and cysteine 959.

The protein belongs to the class-I aminoacyl-tRNA synthetase family. IleS type 1 subfamily. Monomer. Requires Zn(2+) as cofactor.

It is found in the cytoplasm. The catalysed reaction is tRNA(Ile) + L-isoleucine + ATP = L-isoleucyl-tRNA(Ile) + AMP + diphosphate. Its function is as follows. Catalyzes the attachment of isoleucine to tRNA(Ile). As IleRS can inadvertently accommodate and process structurally similar amino acids such as valine, to avoid such errors it has two additional distinct tRNA(Ile)-dependent editing activities. One activity is designated as 'pretransfer' editing and involves the hydrolysis of activated Val-AMP. The other activity is designated 'posttransfer' editing and involves deacylation of mischarged Val-tRNA(Ile). This chain is Isoleucine--tRNA ligase, found in Prochlorococcus marinus (strain MIT 9301).